A 467-amino-acid chain; its full sequence is ADP-dependent glucose/glucosamine kinase (467 aa).

The region spanning Arg-10–Arg-467 is the ADPK domain. D-glucose-binding positions include Asp-42, Glu-96, Gly-120, Gly-120 to Gln-121, His-184, and Asp-211. Glu-279 serves as a coordination point for Mg(2+). Asn-305 is an ADP binding site. A Mg(2+)-binding site is contributed by Glu-308. ADP-binding positions include His-352–Thr-353, Val-440, and Gly-450. A D-glucose-binding site is contributed by Asp-451. Residue Asp-451 participates in Mg(2+) binding. Asp-451 functions as the Proton acceptor in the catalytic mechanism.

It belongs to the ADP-dependent glucokinase family. Monomer. Mg(2+) is required as a cofactor.

The protein localises to the cytoplasm. It catalyses the reaction D-glucose + ADP = D-glucose 6-phosphate + AMP + H(+). The enzyme catalyses D-glucosamine + ADP = D-glucosamine 6-phosphate + AMP + H(+). The protein operates within carbohydrate degradation; glycolysis. Functionally, catalyzes the ADP-dependent phosphorylation of D-glucose to D-glucose 6-phosphate and glucosamine to glucosamine 6-phosphate. Can also use CDP as the phosphoryl group donor and D-1,5-anhydroglucitol as the phosphoryl group acceptor. The polypeptide is ADP-dependent glucose/glucosamine kinase (Thermococcus litoralis (strain ATCC 51850 / DSM 5473 / JCM 8560 / NS-C)).